We begin with the raw amino-acid sequence, 569 residues long: Pyrophosphate--fructose 6-phosphate 1-phosphotransferase subunit beta 2 (569 aa).

Position 107 (Gly-107) interacts with diphosphate. Asp-201 is a binding site for Mg(2+). Residues 229–231 (TID), 268–269 (KY), 276–278 (MGR), Glu-337, and 442–445 (YEGR) contribute to the substrate site. The active-site Proton acceptor is the Asp-231.

It belongs to the phosphofructokinase type A (PFKA) family. PPi-dependent PFK group II subfamily. Clade 'Long' sub-subfamily. As to quaternary structure, tetramer of two alpha (regulatory) and two beta (catalytic) chains. It depends on Mg(2+) as a cofactor.

Its subcellular location is the cytoplasm. The catalysed reaction is beta-D-fructose 6-phosphate + diphosphate = beta-D-fructose 1,6-bisphosphate + phosphate + H(+). The protein operates within carbohydrate degradation; glycolysis; D-glyceraldehyde 3-phosphate and glycerone phosphate from D-glucose: step 3/4. Allosterically activated by fructose 2,6-bisphosphate. Functionally, catalytic subunit of pyrophosphate--fructose 6-phosphate 1-phosphotransferase. Catalyzes the phosphorylation of D-fructose 6-phosphate, the first committing step of glycolysis. Uses inorganic phosphate (PPi) as phosphoryl donor instead of ATP like common ATP-dependent phosphofructokinases (ATP-PFKs), which renders the reaction reversible, and can thus function both in glycolysis and gluconeogenesis. The chain is Pyrophosphate--fructose 6-phosphate 1-phosphotransferase subunit beta 2 from Arabidopsis thaliana (Mouse-ear cress).